A 536-amino-acid chain; its full sequence is 2-isopropylmalate synthase (536 aa).

Positions 8 to 269 (IIIFDTTLRD…YYNPFLGRPV (262 aa)) constitute a Pyruvate carboxyltransferase domain. Mn(2+) contacts are provided by D17, H208, H210, and N244. The interval 408–536 (RLELVQVSCG…KEKAAVTSAS (129 aa)) is regulatory domain.

This sequence belongs to the alpha-IPM synthase/homocitrate synthase family. LeuA type 1 subfamily. As to quaternary structure, homodimer. Mn(2+) is required as a cofactor.

It localises to the cytoplasm. The enzyme catalyses 3-methyl-2-oxobutanoate + acetyl-CoA + H2O = (2S)-2-isopropylmalate + CoA + H(+). The protein operates within amino-acid biosynthesis; L-leucine biosynthesis; L-leucine from 3-methyl-2-oxobutanoate: step 1/4. Functionally, catalyzes the condensation of the acetyl group of acetyl-CoA with 3-methyl-2-oxobutanoate (2-ketoisovalerate) to form 3-carboxy-3-hydroxy-4-methylpentanoate (2-isopropylmalate). This Gloeothece citriformis (strain PCC 7424) (Cyanothece sp. (strain PCC 7424)) protein is 2-isopropylmalate synthase.